A 342-amino-acid chain; its full sequence is Glycerol-1-phosphate dehydrogenase [NAD(P)+] (342 aa).

NAD(+) contacts are provided by residues 84–88 (GRPID) and 106–109 (TSAS). Asp111 is a binding site for substrate. NAD(+) is bound at residue Ser115. Asp160 is a binding site for substrate. Residues Asp160 and His241 each coordinate Zn(2+). His245 provides a ligand contact to substrate. His260 lines the Zn(2+) pocket.

This sequence belongs to the glycerol-1-phosphate dehydrogenase family. As to quaternary structure, homodimer. Zn(2+) serves as cofactor.

The protein localises to the cytoplasm. It catalyses the reaction sn-glycerol 1-phosphate + NAD(+) = dihydroxyacetone phosphate + NADH + H(+). It carries out the reaction sn-glycerol 1-phosphate + NADP(+) = dihydroxyacetone phosphate + NADPH + H(+). It participates in membrane lipid metabolism; glycerophospholipid metabolism. In terms of biological role, catalyzes the NAD(P)H-dependent reduction of dihydroxyacetonephosphate (DHAP or glycerone phosphate) to glycerol 1-phosphate (G1P). The G1P thus generated is used as the glycerophosphate backbone of phospholipids in the cellular membranes of Archaea. This chain is Glycerol-1-phosphate dehydrogenase [NAD(P)+], found in Pyrobaculum islandicum (strain DSM 4184 / JCM 9189 / GEO3).